The chain runs to 255 residues: Ribosomal RNA small subunit methyltransferase A (255 aa).

His12, Leu14, Gly39, Glu60, Asp81, and Asn103 together coordinate S-adenosyl-L-methionine.

The protein belongs to the class I-like SAM-binding methyltransferase superfamily. rRNA adenine N(6)-methyltransferase family. RsmA subfamily.

It is found in the cytoplasm. It carries out the reaction adenosine(1518)/adenosine(1519) in 16S rRNA + 4 S-adenosyl-L-methionine = N(6)-dimethyladenosine(1518)/N(6)-dimethyladenosine(1519) in 16S rRNA + 4 S-adenosyl-L-homocysteine + 4 H(+). Its function is as follows. Specifically dimethylates two adjacent adenosines (A1518 and A1519) in the loop of a conserved hairpin near the 3'-end of 16S rRNA in the 30S particle. May play a critical role in biogenesis of 30S subunits. This chain is Ribosomal RNA small subunit methyltransferase A, found in Variovorax paradoxus (strain S110).